The primary structure comprises 44 residues: Photosystem I reaction center subunit IX (44 aa).

Residues 7–27 (YLSVAPVLSTLWFGALAGLLI) traverse the membrane as a helical segment.

The protein belongs to the PsaJ family.

It is found in the plastid. The protein resides in the chloroplast thylakoid membrane. In terms of biological role, may help in the organization of the PsaE and PsaF subunits. This chain is Photosystem I reaction center subunit IX, found in Coffea arabica (Arabian coffee).